Here is a 481-residue protein sequence, read N- to C-terminus: uncharacterized protein (481 aa).

13 helical membrane passes run 3–23 (YLPM…LLHG), 33–53 (FITA…YYYF), 75–95 (QAII…GMGE), 99–119 (NNMF…IVLA), 122–142 (IFNL…LVFL), 155–175 (YMIM…FLLA), 196–216 (IYGG…LPPF), 241–261 (FVLV…DYFA), 264–284 (HAVL…MALL), 303–323 (VATG…FHAI), 351–371 (GGLL…KLAI), 400–420 (IIMI…FYLI), and 443–463 (VFSL…PDIV).

The protein localises to the cell membrane. This is an uncharacterized protein from Methanocaldococcus jannaschii (strain ATCC 43067 / DSM 2661 / JAL-1 / JCM 10045 / NBRC 100440) (Methanococcus jannaschii).